Here is a 343-residue protein sequence, read N- to C-terminus: F17e-G fimbrial adhesin (343 aa).

Residues 1–22 (MTNFYKVFLAVFILVCCNISHA) form the signal peptide. Residues 23 to 199 (AVSFIGSTEN…LNPFTLNDTV (177 aa)) form a receptor-binding lectin domain region. A carbohydrate is bound by residues 65–66 (AN), 110–111 (DT), and 138–141 (STQG). A disulfide bridge links Cys-75 with Cys-132. The segment at 200–343 (TSCRLLTPSA…GISTFTFSYQ (144 aa)) is fimbrillin-binding domain. The segment at 287–307 (LKFGPDSPVKGNENQWQLSTG) is disordered. The span at 298-307 (NENQWQLSTG) shows a compositional bias: polar residues.

This sequence belongs to the fimbrial protein family.

The protein localises to the fimbrium. Functionally, essential fimbrial adhesion factor that mediates binding to N-acetylglucosamine-containing receptors in the host intestinal microvilli, leading to colonization of the intestinal tissue, and diarrhea or septicemia. Also confers adhesiveness to laminin and basement membranes. The polypeptide is F17e-G fimbrial adhesin (f17eG) (Escherichia coli).